Consider the following 369-residue polypeptide: FAD-dependent monooxygenase FPY4 (369 aa).

The protein belongs to the aromatic-ring hydroxylase family. FAD serves as cofactor.

It participates in secondary metabolite biosynthesis. In terms of biological role, FAD-dependent monooxygenase; part of the gene cluster that mediates the biosynthesis of the gamma-pyrones fusapyrone (FPY) and deoxyfusapyrone (dFPY). FPY is an undecaketide and thus likely synthesized by the polyketide synthase FPY1 from acetyl-CoA functioning as starter unit and the addition of 10 malonyl-CoA extender units by successive Claisen-condensations. Next to this, FPY shares some rare features: C-glycosylated 4-deoxyglucose at C-3, a gem-dimethyl group at C-13, and an alpha-beta to beta-gamma double bond shift at C-20. During FPY biosynthesis mono-C-methyl groups are transferred to the tetra-, penta-, hexa- and heptaketide, while two C-methyl groups are transferred to the nonaketide, suggesting that the CMet domain is programmed to selectively catalyze two successive C-alpha-methylation reactions of the nonaketide, while other alpha-carbons are non- or mono-methylated only. While the origin of the 4'-deoxyglucose moiety remains opaque, its transfer to C-3 is most likely mediated by the C-glycosyltransferase FPY2. Next to this, the hydroxyl group present at C-33 and discriminating between FPY and dFPY, is likely to be installed by the cytochrome P450 monooxygenase FPY7. No putative function can be predicted for the remaining genes FPY3-FPY6. This is FAD-dependent monooxygenase FPY4 from Fusarium mangiferae (Mango malformation disease fungus).